Here is a 143-residue protein sequence, read N- to C-terminus: Ribosome maturation factor RimP (143 aa).

Belongs to the RimP family.

It is found in the cytoplasm. In terms of biological role, required for maturation of 30S ribosomal subunits. The polypeptide is Ribosome maturation factor RimP (Neisseria gonorrhoeae (strain ATCC 700825 / FA 1090)).